The primary structure comprises 180 residues: Shikimate kinase (180 aa).

Gly14–Ser19 provides a ligand contact to ATP. Residue Ser18 participates in Mg(2+) binding. Residues Asp36, Arg60, and Gly82 each coordinate substrate. Arg120 serves as a coordination point for ATP. Arg139 serves as a coordination point for substrate.

The protein belongs to the shikimate kinase family. As to quaternary structure, monomer. Mg(2+) serves as cofactor.

Its subcellular location is the cytoplasm. It carries out the reaction shikimate + ATP = 3-phosphoshikimate + ADP + H(+). It functions in the pathway metabolic intermediate biosynthesis; chorismate biosynthesis; chorismate from D-erythrose 4-phosphate and phosphoenolpyruvate: step 5/7. Its function is as follows. Catalyzes the specific phosphorylation of the 3-hydroxyl group of shikimic acid using ATP as a cosubstrate. The polypeptide is Shikimate kinase (Xylella fastidiosa (strain M23)).